The following is a 193-amino-acid chain: MSMSQPSIDFSASSVDVARSLIGATLLVNGVGGRIVETEAYDHDDPASHSFSGPTRRNQVMFGPPCHAYIYRSYGIHWCLNFVCRPAGHGAGVLIRAIEPLVGLDIMRKRRGLSDERLLCSGPGRVCEALGITQEYSGMSIDTPPFQLTPPLDPVPVVTGPRIGISKAKDVPWRFGLAGSPFLSRPFRQPDIV.

The protein belongs to the DNA glycosylase MPG family.

The chain is Putative 3-methyladenine DNA glycosylase from Nitrosospira multiformis (strain ATCC 25196 / NCIMB 11849 / C 71).